A 103-amino-acid polypeptide reads, in one-letter code: Histone H4 (103 aa).

Residues 1 to 14 (MSGRGKGGKGLGKG) show a composition bias toward gly residues. A disordered region spans residues 1-20 (MSGRGKGGKGLGKGGAKRHR). An N6-acetyl-N6-methyllysine; alternate modification is found at Lys-6. 3 positions are modified to N6-acetyllysine; alternate: Lys-6, Lys-9, and Lys-13. Residues Lys-6, Lys-9, and Lys-13 each carry the N6-methyllysine; alternate modification. N6-butyryllysine; alternate occurs at positions 9 and 13. At Lys-13 the chain carries N6-acetyl-N6-methyllysine; alternate. Position 17 is an N6-acetyllysine (Lys-17). The DNA-binding element occupies 17–21 (KRHRK). Lys-32 carries the post-translational modification N6-succinyllysine. Arg-56 is subject to Omega-N-methylarginine. Residues Ser-61 and Ser-65 each carry the phosphoserine modification. Position 78 is an N6-succinyllysine (Lys-78). Lys-80 carries the post-translational modification N6-acetyllysine. Lys-92 is subject to N6-glutaryllysine.

It belongs to the histone H4 family. In terms of assembly, the nucleosome is a histone octamer containing two molecules each of H2A, H2B, H3 and H4 assembled in one H3-H4 heterotetramer and two H2A-H2B heterodimers. The octamer wraps approximately 147 bp of DNA. Histone H4 is a component of the UAF (upstream activation factor) complex which consists of UAF30, RRN5, RRN9, RRN10, and histones H3 and H4. In terms of processing, glutarylation at Lys-92 (H4K91glu) destabilizes nucleosomes by promoting dissociation of the H2A-H2B dimers from nucleosomes.

It localises to the nucleus. It is found in the chromosome. In terms of biological role, core component of nucleosome. Nucleosomes wrap and compact DNA into chromatin, limiting DNA accessibility to the cellular machineries which require DNA as a template. Histones thereby play a central role in transcription regulation, DNA repair, DNA replication and chromosomal stability. DNA accessibility is regulated via a complex set of post-translational modifications of histones, also called histone code, and nucleosome remodeling. Component of the UAF (upstream activation factor) complex which interacts with the upstream element of the RNA polymerase I promoter and forms a stable preinitiation complex. Together with SPT15/TBP UAF seems to stimulate basal transcription to a fully activated level. The chain is Histone H4 (HHF1) from Saccharomyces cerevisiae (strain ATCC 204508 / S288c) (Baker's yeast).